A 583-amino-acid polypeptide reads, in one-letter code: Zinc finger protein 277 (583 aa).

2 C2H2-type zinc fingers span residues 351-375 (LQCL…KKQH) and 482-508 (HQCK…DTKH).

The protein belongs to the ZNF277 family. Interacts (via zinc-finger domains) with RPS2/40S ribosomal protein S2, perhaps as nascent RPS2 is synthesized during translation; the interaction is direct; the interaction is extra-ribosomal. Interaction with RPS2 competes with the binding of RPS2 to protein arginine methyltransferase PRMT3. Interacts with Polycomb group (PcG) complex protein BMI1. May be part of a complex including at least ZNF277, BMI1 and RNF2/RING2.

Its subcellular location is the nucleus. It localises to the cytoplasm. The protein resides in the nucleolus. The protein localises to the chromosome. Probable transcription factor. Involved in modulation of cellular senescence; represses transcription of the tumor suppressor gene INK4A/ARF, perhaps acting via the Polycomb group (PcG) complex PRC1. In Mus musculus (Mouse), this protein is Zinc finger protein 277.